Consider the following 321-residue polypeptide: Annexin B10 (321 aa).

4 Annexin repeats span residues 15–86 (FDAS…GLMM), 87–158 (PPVE…LIVT), 171–243 (GQAK…AIVE), and 247–319 (SPAA…ALLG).

The protein belongs to the annexin family.

The protein is Annexin B10 (AnxB10) of Drosophila melanogaster (Fruit fly).